We begin with the raw amino-acid sequence, 239 residues long: Ribonuclease PH (239 aa).

Phosphate-binding positions include Arg87 and 125–127; that span reads GTR.

It belongs to the RNase PH family. As to quaternary structure, homohexameric ring arranged as a trimer of dimers.

The catalysed reaction is tRNA(n+1) + phosphate = tRNA(n) + a ribonucleoside 5'-diphosphate. Phosphorolytic 3'-5' exoribonuclease that plays an important role in tRNA 3'-end maturation. Removes nucleotide residues following the 3'-CCA terminus of tRNAs; can also add nucleotides to the ends of RNA molecules by using nucleoside diphosphates as substrates, but this may not be physiologically important. Probably plays a role in initiation of 16S rRNA degradation (leading to ribosome degradation) during starvation. This chain is Ribonuclease PH, found in Cellvibrio japonicus (strain Ueda107) (Pseudomonas fluorescens subsp. cellulosa).